Consider the following 433-residue polypeptide: Pyroglutamylated RF-amide peptide receptor (433 aa).

Topologically, residues 1 to 46 (MQALNITAEQFSRLLSAHNLTREQFIHRYGLRPLVYTPELPARAKL) are extracellular. Asn-5 and Asn-19 each carry an N-linked (GlcNAc...) asparagine glycan. The helical transmembrane segment at 47 to 67 (AFALAGALIFALALFGNSLVI) threads the bilayer. Over 68–81 (YVVTRSKAMRTVTN) the chain is Cytoplasmic. A helical membrane pass occupies residues 82–102 (IFICSLALSDLLIAFFCIPVT). The Extracellular portion of the chain corresponds to 103–120 (MLQNISDKWLGGAFICKM). Residues 121–141 (VPFVQSTAVVTEILTMTCIAV) form a helical membrane-spanning segment. At 142-162 (ERHQGLIHPFKMKWQYTTRRA) the chain is on the cytoplasmic side. Residues 163-183 (FTILGVVWLAAIIVGSPMWHV) form a helical membrane-spanning segment. The Extracellular portion of the chain corresponds to 184-212 (QRLEIKYDFLYEKEHVCCLEEWASPMHQR). The helical transmembrane segment at 213-233 (IYTTFILVILFLLPLVVMLVL) threads the bilayer. Residues 234-271 (YSKIGYELWIKKRVGDSSALQTIHGKEMSKIARKKKRA) lie on the Cytoplasmic side of the membrane. Residues 272 to 292 (VVMMVTVVALFAACWAPFHVV) traverse the membrane as a helical segment. Residues 293 to 313 (HMMVEYSNFEKEYDDVTIKMV) are Extracellular-facing. Residues 314–334 (FAVAQTIGFFNSICNPFVYAF) traverse the membrane as a helical segment. Residues 335–433 (MNENFKKNFL…NSTFGSGHEL (99 aa)) are Cytoplasmic-facing.

This sequence belongs to the G-protein coupled receptor 1 family. Expressed widely in the brain with high levels in the cortex and hypothalamus, and moderate levels in the brain stem, caudate nucleus, midbrain hippocampus, thalamus, trigeminal ganglia and spinal cord. Particularly strong expression detected in the mitral cell layer of the olfactory bulb, accessory olfactory bulb, island of Calleja and nucleus of the solitary tract. In peripheral tissues, expressed at moderate levels in the eye, liver, kidney, pituitary gland, testis and thymus.

It localises to the cell membrane. Functionally, receptor for the orexigenic neuropeptide QRFP. The activity of this receptor is mediated by G proteins that modulate adenylate cyclase activity and intracellular calcium levels. This is Pyroglutamylated RF-amide peptide receptor (Qrfpr) from Mus musculus (Mouse).